A 457-amino-acid chain; its full sequence is Phosphomethylpyrimidine synthase (457 aa).

Residues N81, M110, Y139, H175, 195 to 197 (SRG), 236 to 239 (DALR), and E275 contribute to the substrate site. Zn(2+) is bound at residue H279. Position 302 (Y302) interacts with substrate. Residue H343 participates in Zn(2+) binding. Residues C423, C426, and C431 each coordinate [4Fe-4S] cluster.

This sequence belongs to the ThiC family. [4Fe-4S] cluster serves as cofactor.

It catalyses the reaction 5-amino-1-(5-phospho-beta-D-ribosyl)imidazole + S-adenosyl-L-methionine = 4-amino-2-methyl-5-(phosphooxymethyl)pyrimidine + CO + 5'-deoxyadenosine + formate + L-methionine + 3 H(+). The protein operates within cofactor biosynthesis; thiamine diphosphate biosynthesis. In terms of biological role, catalyzes the synthesis of the hydroxymethylpyrimidine phosphate (HMP-P) moiety of thiamine from aminoimidazole ribotide (AIR) in a radical S-adenosyl-L-methionine (SAM)-dependent reaction. The protein is Phosphomethylpyrimidine synthase of Aquifex aeolicus (strain VF5).